A 100-amino-acid chain; its full sequence is Integration host factor subunit alpha (100 aa).

The protein belongs to the bacterial histone-like protein family. As to quaternary structure, heterodimer of an alpha and a beta chain.

This protein is one of the two subunits of integration host factor, a specific DNA-binding protein that functions in genetic recombination as well as in transcriptional and translational control. This is Integration host factor subunit alpha from Caulobacter sp. (strain K31).